We begin with the raw amino-acid sequence, 801 residues long: Cadherin-20 (801 aa).

An N-terminal signal peptide occupies residues 1-34 (MWTSGRMSNAKNWLGLGMSLYFWGLMDLTTTVLS). A propeptide spanning residues 35-59 (DTPTPQGELEALLSDKPQSHQRTKR) is cleaved from the precursor. The Extracellular portion of the chain corresponds to 60 to 619 (SWVWNQFFVL…AYMLPVSLSR (560 aa)). Cadherin domains are found at residues 61-165 (WVWN…EPKF), 166-274 (LDGP…PPRF), 275-389 (PQKH…PPVF), 390-494 (EPGF…APEF), and 494-610 (FPRF…SPEA). A glycan (N-linked (GlcNAc...) asparagine) is linked at N261. Residues N420, N461, and N542 are each glycosylated (N-linked (GlcNAc...) asparagine). Residues 620-640 (GALIAILACIFVLLVLVLLIL) traverse the membrane as a helical segment. Residues 641 to 801 (SMRRHRKQPY…GASEGPAPLW (161 aa)) lie on the Cytoplasmic side of the membrane.

In terms of tissue distribution, expressed in placenta, adult brain, and fetal brain.

The protein resides in the cell membrane. Cadherins are calcium-dependent cell adhesion proteins. They preferentially interact with themselves in a homophilic manner in connecting cells; cadherins may thus contribute to the sorting of heterogeneous cell types. This chain is Cadherin-20 (CDH20), found in Homo sapiens (Human).